The sequence spans 74 residues: Probable tetrachloroethene reductive dehalogenase membrane anchor protein (74 aa).

The next 2 membrane-spanning stretches (helical) occupy residues 11–31 (ALGL…ISMG) and 40–60 (AGSI…FLLM).

Belongs to the PceB family.

It is found in the cell inner membrane. May act as a membrane anchor for the tetrachloroethene reductive dehalogenase PceA. This Sulfurospirillum multivorans (Dehalospirillum multivorans) protein is Probable tetrachloroethene reductive dehalogenase membrane anchor protein.